Reading from the N-terminus, the 293-residue chain is Fructose-bisphosphate aldolase class 1 (293 aa).

Residue glutamate 176 is the Proton acceptor of the active site. The active-site Schiff-base intermediate with dihydroxyacetone-P is the lysine 211.

The protein belongs to the class I fructose-bisphosphate aldolase family.

The catalysed reaction is beta-D-fructose 1,6-bisphosphate = D-glyceraldehyde 3-phosphate + dihydroxyacetone phosphate. It functions in the pathway carbohydrate degradation; glycolysis; D-glyceraldehyde 3-phosphate and glycerone phosphate from D-glucose: step 4/4. The polypeptide is Fructose-bisphosphate aldolase class 1 (Porphyromonas gingivalis (strain ATCC 33277 / DSM 20709 / CIP 103683 / JCM 12257 / NCTC 11834 / 2561)).